The chain runs to 309 residues: Tagatose-6-phosphate kinase (309 aa).

Belongs to the carbohydrate kinase PfkB family. LacC subfamily.

It carries out the reaction D-tagatofuranose 6-phosphate + ATP = D-tagatofuranose 1,6-bisphosphate + ADP + H(+). Its pathway is carbohydrate metabolism; D-tagatose 6-phosphate degradation; D-glyceraldehyde 3-phosphate and glycerone phosphate from D-tagatose 6-phosphate: step 1/2. This Streptococcus pyogenes serotype M28 (strain MGAS6180) protein is Tagatose-6-phosphate kinase.